The following is a 233-amino-acid chain: Preprocaerulein type-4 (233 aa).

The first 26 residues, 1–26 (MFKGILLCVLFAVLSANPLSQPEGFA), serve as a signal peptide directing secretion. The propeptide occupies 27-72 (DEERDVRGLASLLGKALKATLKIGTHFLGGAPQQREANDERRFADG). The residue at position 73 (Gln-73) is a Pyrrolidone carboxylic acid. Tyr-76 bears the Sulfotyrosine mark. Residue Phe-82 is modified to Phenylalanine amide. The propeptide occupies 86–87 (DG). Gln-88 bears the Pyrrolidone carboxylic acid mark. Tyr-91 is modified (sulfotyrosine). Phe-97 is subject to Phenylalanine amide. Positions 101–151 (DDEDDVHERDVRGFGSFLGKALKAALKIGANALGGAPQQREANDERRFADG) are excised as a propeptide. Position 152 is a pyrrolidone carboxylic acid (Gln-152). Sulfotyrosine is present on Tyr-155. A Phenylalanine amide modification is found at Phe-161. Residues 165–215 (DDEDDVNERDVRGFGSFLGKALKAALKIGANALGGSPQQREANDERRFADG) constitute a propeptide that is removed on maturation. A disordered region spans residues 197–233 (LGGSPQQREANDERRFADGQQDYTGWMDFGRRNGEDD). Position 216 is a pyrrolidone carboxylic acid (Gln-216). At Tyr-219 the chain carries Sulfotyrosine. Phe-225 carries the post-translational modification Phenylalanine amide. A propeptide spanning residues 229–233 (NGEDD) is cleaved from the precursor.

This sequence belongs to the gastrin/cholecystokinin family. Expressed by the skin glands.

The protein localises to the secreted. Functionally, the pharmacological activities of caerulein are quite similar to the physiological activities of gastrin and related peptides. The protein is Preprocaerulein type-4 of Xenopus laevis (African clawed frog).